Consider the following 386-residue polypeptide: ORC1-type DNA replication protein 3 (386 aa).

ATP-binding positions include 65-69 (TGKTF) and Tyr206.

Belongs to the CDC6/cdc18 family.

Its function is as follows. Involved in regulation of DNA replication. The sequence is that of ORC1-type DNA replication protein 3 (cdc6-3) from Sulfurisphaera tokodaii (strain DSM 16993 / JCM 10545 / NBRC 100140 / 7) (Sulfolobus tokodaii).